Reading from the N-terminus, the 274-residue chain is NADPH-dependent 7-cyano-7-deazaguanine reductase (274 aa).

Residue valine 80–serine 82 participates in substrate binding. Position 82 to 83 (serine 82 to lysine 83) interacts with NADPH. The Thioimide intermediate role is filled by cysteine 181. Aspartate 188 acts as the Proton donor in catalysis. A substrate-binding site is contributed by histidine 220–glutamate 221. Residue arginine 249 to glycine 250 coordinates NADPH.

Belongs to the GTP cyclohydrolase I family. QueF type 2 subfamily. As to quaternary structure, homodimer.

It is found in the cytoplasm. It carries out the reaction 7-aminomethyl-7-carbaguanine + 2 NADP(+) = 7-cyano-7-deazaguanine + 2 NADPH + 3 H(+). It participates in tRNA modification; tRNA-queuosine biosynthesis. In terms of biological role, catalyzes the NADPH-dependent reduction of 7-cyano-7-deazaguanine (preQ0) to 7-aminomethyl-7-deazaguanine (preQ1). This chain is NADPH-dependent 7-cyano-7-deazaguanine reductase, found in Burkholderia lata (strain ATCC 17760 / DSM 23089 / LMG 22485 / NCIMB 9086 / R18194 / 383).